A 955-amino-acid chain; its full sequence is Glycine dehydrogenase (decarboxylating) (955 aa).

Lys702 bears the N6-(pyridoxal phosphate)lysine mark.

It belongs to the GcvP family. The glycine cleavage system is composed of four proteins: P, T, L and H. Requires pyridoxal 5'-phosphate as cofactor.

It carries out the reaction N(6)-[(R)-lipoyl]-L-lysyl-[glycine-cleavage complex H protein] + glycine + H(+) = N(6)-[(R)-S(8)-aminomethyldihydrolipoyl]-L-lysyl-[glycine-cleavage complex H protein] + CO2. In terms of biological role, the glycine cleavage system catalyzes the degradation of glycine. The P protein binds the alpha-amino group of glycine through its pyridoxal phosphate cofactor; CO(2) is released and the remaining methylamine moiety is then transferred to the lipoamide cofactor of the H protein. This Bradyrhizobium diazoefficiens (strain JCM 10833 / BCRC 13528 / IAM 13628 / NBRC 14792 / USDA 110) protein is Glycine dehydrogenase (decarboxylating).